A 203-amino-acid polypeptide reads, in one-letter code: Large ribosomal subunit protein bL25 (203 aa).

Belongs to the bacterial ribosomal protein bL25 family. CTC subfamily. In terms of assembly, part of the 50S ribosomal subunit; part of the 5S rRNA/L5/L18/L25 subcomplex. Contacts the 5S rRNA. Binds to the 5S rRNA independently of L5 and L18.

In terms of biological role, this is one of the proteins that binds to the 5S RNA in the ribosome where it forms part of the central protuberance. This is Large ribosomal subunit protein bL25 from Psychromonas ingrahamii (strain DSM 17664 / CCUG 51855 / 37).